The primary structure comprises 338 residues: Aspartate carbamoyltransferase catalytic subunit (338 aa).

Positions 72 and 73 each coordinate carbamoyl phosphate. An L-aspartate-binding site is contributed by K100. Carbamoyl phosphate contacts are provided by R122, H152, and Q155. The L-aspartate site is built by R186 and R243. Carbamoyl phosphate contacts are provided by G284 and P285.

Belongs to the aspartate/ornithine carbamoyltransferase superfamily. ATCase family. In terms of assembly, heterododecamer (2C3:3R2) of six catalytic PyrB chains organized as two trimers (C3), and six regulatory PyrI chains organized as three dimers (R2).

The catalysed reaction is carbamoyl phosphate + L-aspartate = N-carbamoyl-L-aspartate + phosphate + H(+). It participates in pyrimidine metabolism; UMP biosynthesis via de novo pathway; (S)-dihydroorotate from bicarbonate: step 2/3. In terms of biological role, catalyzes the condensation of carbamoyl phosphate and aspartate to form carbamoyl aspartate and inorganic phosphate, the committed step in the de novo pyrimidine nucleotide biosynthesis pathway. In Acinetobacter baumannii (strain ACICU), this protein is Aspartate carbamoyltransferase catalytic subunit.